The sequence spans 483 residues: MGFTLAIVGRPNVGKSTLFNRLVGRKLALVDDLPGVTRDRRIHDAKLYDLKFQVIDTAGLEEAANDSLEARMRAQTEAAISEADAVLFVIDAKAGITPADSTFAEAVRRSGKPVVLVANKAEARGSEAGMYDAFQLGLGEPCPISAEHGQGMPDLRDAIVELLGEERVFAEERQEEAADEVFTPAAVGALVGDDIEDPDAEEIPAYDATKPLRIAIVGRPNAGKSTLINTMLGEDRLLTGPEAGITRDSISADWEWHGRKIKLFDTAGMRRKARVQEKLEKLSVADSLRAIRFAEVVIIVLDATIPFEKQDLQIADLIIREGRAPVIAFNKWDLIEDRQMVLADLYEKTARLLPQVRGLRAVPISGERGQGIDKLMENVVKTHEIWNRRISTGRLNRWLEGVIAHQPPPAVSGRRLKVKYMTQVKTRPPGFVVSCSRPDAMPQSYVRYLINGLRETFDMPGVPIRLSLRTSDNPFAGRAKKKK.

EngA-type G domains follow at residues 3 to 167 (FTLA…GEER) and 212 to 387 (LRIA…EIWN). Residues 9–16 (GRPNVGKS), 56–60 (DTAGL), 119–122 (NKAE), 218–225 (GRPNAGKS), 265–269 (DTAGM), and 330–333 (NKWD) contribute to the GTP site. A KH-like domain is found at 388–472 (RRISTGRLNR…PIRLSLRTSD (85 aa)).

This sequence belongs to the TRAFAC class TrmE-Era-EngA-EngB-Septin-like GTPase superfamily. EngA (Der) GTPase family. Associates with the 50S ribosomal subunit.

Functionally, GTPase that plays an essential role in the late steps of ribosome biogenesis. The sequence is that of GTPase Der from Brucella melitensis biotype 2 (strain ATCC 23457).